A 476-amino-acid polypeptide reads, in one-letter code: Calcium/calmodulin-dependent protein kinase type 1G (476 aa).

One can recognise a Protein kinase domain in the interval 23–277; the sequence is FIFMEVLGSG…CEKALSHPWI (255 aa). Residues 29–37 and K52 contribute to the ATP site; that span reads LGSGAFSEV. D143 acts as the Proton acceptor in catalysis. An autoinhibitory domain region spans residues 277–317; it reads IDGNTALHRDIYPSVSLQIQKNFAKSKWRQAFNAAAVVHHM. The segment at 297–318 is calmodulin-binding; the sequence is KNFAKSKWRQAFNAAAVVHHMR. The segment at 325–352 is disordered; the sequence is HSPGVRPEVENRPPETQASETSRPSSPE. The span at 338 to 352 shows a compositional bias: polar residues; that stretch reads PETQASETSRPSSPE.

The protein belongs to the protein kinase superfamily. CAMK Ser/Thr protein kinase family. CaMK subfamily. In terms of processing, may be prenylated on Cys-473. As to expression, mainly expressed in brain with small amounts in skeletal muscles, kidney, spleen and liver. Strongly expressed in forebrain neocortex, striatum and limbic system.

It localises to the cytoplasm. The protein localises to the golgi apparatus membrane. Its subcellular location is the cell membrane. The enzyme catalyses L-seryl-[protein] + ATP = O-phospho-L-seryl-[protein] + ADP + H(+). It carries out the reaction L-threonyl-[protein] + ATP = O-phospho-L-threonyl-[protein] + ADP + H(+). Activated by Ca(2+)/calmodulin. Binding of calmodulin is thought to result in a conformational change and leads to activation through phosphorylation by CAMKK1. Calcium/calmodulin-dependent protein kinase belonging to a proposed calcium-triggered signaling cascade. In vitro phosphorylates transcription factor CREB1. The chain is Calcium/calmodulin-dependent protein kinase type 1G (CAMK1G) from Homo sapiens (Human).